The sequence spans 390 residues: Acetylornithine aminotransferase (390 aa).

Pyridoxal 5'-phosphate-binding positions include Gly-105 to Ala-106 and Phe-132. Arg-135 serves as a coordination point for N(2)-acetyl-L-ornithine. Asp-217–Gln-220 contributes to the pyridoxal 5'-phosphate binding site. The residue at position 246 (Lys-246) is an N6-(pyridoxal phosphate)lysine. Ser-274 lines the N(2)-acetyl-L-ornithine pocket. Thr-275 is a binding site for pyridoxal 5'-phosphate.

This sequence belongs to the class-III pyridoxal-phosphate-dependent aminotransferase family. ArgD subfamily. Homodimer. Pyridoxal 5'-phosphate serves as cofactor.

The protein localises to the cytoplasm. It catalyses the reaction N(2)-acetyl-L-ornithine + 2-oxoglutarate = N-acetyl-L-glutamate 5-semialdehyde + L-glutamate. It participates in amino-acid biosynthesis; L-arginine biosynthesis; N(2)-acetyl-L-ornithine from L-glutamate: step 4/4. This chain is Acetylornithine aminotransferase, found in Methanothermobacter thermautotrophicus (strain ATCC 29096 / DSM 1053 / JCM 10044 / NBRC 100330 / Delta H) (Methanobacterium thermoautotrophicum).